We begin with the raw amino-acid sequence, 252 residues long: PF03932 family protein CutC (252 aa).

The protein belongs to the CutC family.

It localises to the cytoplasm. This is PF03932 family protein CutC from Sodalis glossinidius (strain morsitans).